Here is a 458-residue protein sequence, read N- to C-terminus: tRNA modification GTPase MnmE (458 aa).

Residues Arg-26, Glu-88, and Arg-127 each coordinate (6S)-5-formyl-5,6,7,8-tetrahydrofolate. Positions 224-378 (GLSTAIIGRP…IEDRINQLFF (155 aa)) constitute a TrmE-type G domain. A K(+)-binding site is contributed by Asn-234. Residues 234–239 (NVGKSS), 253–259 (TDIAGTT), and 278–281 (DTAG) each bind GTP. Ser-238 contributes to the Mg(2+) binding site. Residues Thr-253, Ile-255, and Thr-258 each contribute to the K(+) site. Thr-259 serves as a coordination point for Mg(2+). Position 458 (Lys-458) interacts with (6S)-5-formyl-5,6,7,8-tetrahydrofolate.

Belongs to the TRAFAC class TrmE-Era-EngA-EngB-Septin-like GTPase superfamily. TrmE GTPase family. In terms of assembly, homodimer. Heterotetramer of two MnmE and two MnmG subunits. Requires K(+) as cofactor.

The protein localises to the cytoplasm. Functionally, exhibits a very high intrinsic GTPase hydrolysis rate. Involved in the addition of a carboxymethylaminomethyl (cmnm) group at the wobble position (U34) of certain tRNAs, forming tRNA-cmnm(5)s(2)U34. This Streptococcus pyogenes serotype M28 (strain MGAS6180) protein is tRNA modification GTPase MnmE.